Here is a 354-residue protein sequence, read N- to C-terminus: Protein RecA (354 aa).

Residue 67–74 (GPESSGKT) coordinates ATP.

The protein belongs to the RecA family.

It is found in the cytoplasm. Can catalyze the hydrolysis of ATP in the presence of single-stranded DNA, the ATP-dependent uptake of single-stranded DNA by duplex DNA, and the ATP-dependent hybridization of homologous single-stranded DNAs. It interacts with LexA causing its activation and leading to its autocatalytic cleavage. This chain is Protein RecA, found in Yersinia enterocolitica serotype O:8 / biotype 1B (strain NCTC 13174 / 8081).